The primary structure comprises 323 residues: Putative dTDP-D-glucose 4,6-dehydratase (323 aa).

Thr-124 lines the substrate pocket. Asp-125 functions as the Proton donor in the catalytic mechanism. Catalysis depends on proton acceptor residues Glu-126 and Tyr-149.

Belongs to the NAD(P)-dependent epimerase/dehydratase family. dTDP-glucose dehydratase subfamily. The cofactor is NAD(+).

The catalysed reaction is dTDP-alpha-D-glucose = dTDP-4-dehydro-6-deoxy-alpha-D-glucose + H2O. In Acanthamoeba polyphaga mimivirus (APMV), this protein is Putative dTDP-D-glucose 4,6-dehydratase.